The primary structure comprises 333 residues: Transcription initiation factor IIB (333 aa).

The segment at 33 to 64 adopts a TFIIB-type zinc-finger fold; it reads EVYRCPICGNDRFVYNYERGEIVCIVCGAVVQ. Residues C37, C40, C56, and C59 each contribute to the Zn(2+) site. 2 tandem repeats follow at residues 149 to 232 and 243 to 324.

This sequence belongs to the TFIIB family.

Stabilizes TBP binding to an archaeal box-A promoter. Also responsible for recruiting RNA polymerase II to the pre-initiation complex (DNA-TBP-TFIIB). This is Transcription initiation factor IIB from Pyrobaculum islandicum (strain DSM 4184 / JCM 9189 / GEO3).